The following is a 206-amino-acid chain: Ras-related protein ralB-B (206 aa).

21 to 28 (GSGGVGKS) provides a ligand contact to GTP. Positions 43–51 (YEPTKADSY) match the Effector region motif. GTP-binding positions include 68–72 (DTAGQ) and 128–131 (NKSD). Residues 180 to 189 (KMSENKDKNG) are compositionally biased toward basic and acidic residues. The disordered stretch occupies residues 180-206 (KMSENKDKNGKKSGKSKKGFKQRCCLL). A compositionally biased stretch (basic residues) spans 190 to 200 (KKSGKSKKGFK). A Cysteine methyl ester modification is found at Cys203. Cys203 carries the S-geranylgeranyl cysteine lipid modification. Residues 204–206 (CLL) constitute a propeptide, removed in mature form.

It belongs to the small GTPase superfamily. Ras family. As to quaternary structure, interacts with ralbp1 and rap1gds1.

Its subcellular location is the cell membrane. It is found in the midbody. The catalysed reaction is GTP + H2O = GDP + phosphate + H(+). Multifunctional GTPase involved in a variety of cellular processes including gene expression, cell migration, cell proliferation, oncogenic transformation and membrane trafficking. Accomplishes its multiple functions by interacting with distinct downstream effectors. Acts as a GTP sensor for GTP-dependent exocytosis of dense core vesicles. Required both to stabilize the assembly of the exocyst complex and to localize functional exocyst complexes to the leading edge of migrating cells. Required for suppression of apoptosis. In late stages of cytokinesis, upon completion of the bridge formation between dividing cells, mediates exocyst recruitment to the midbody to drive abscission. Regulates the actin cytoskeleton to play a role in gastrulation or neurulation. During the cleavage stages, the GTP-bound form induces a cortical reaction that affects the localization of pigment granules. Activated by the FGF pathway via ras and ral-GDS, but independently of raf. Directs ralbp1 to the plasma membrane. Involved in ligand-dependent receptor mediated endocytosis of the EGF and insulin receptors. The polypeptide is Ras-related protein ralB-B (ralb-b) (Xenopus laevis (African clawed frog)).